The primary structure comprises 267 residues: Formamidopyrimidine-DNA glycosylase (267 aa).

Pro2 acts as the Schiff-base intermediate with DNA in catalysis. Glu3 acts as the Proton donor in catalysis. The Proton donor; for beta-elimination activity role is filled by Lys58. His91, Arg110, and Arg152 together coordinate DNA. The FPG-type zinc finger occupies 233-267; it reads DVYGRGHGTCTSCGGALEAVRLGNRSTVFCPRCQQ. Catalysis depends on Arg257, which acts as the Proton donor; for delta-elimination activity.

Belongs to the FPG family. Monomer. Zn(2+) is required as a cofactor.

The enzyme catalyses Hydrolysis of DNA containing ring-opened 7-methylguanine residues, releasing 2,6-diamino-4-hydroxy-5-(N-methyl)formamidopyrimidine.. The catalysed reaction is 2'-deoxyribonucleotide-(2'-deoxyribose 5'-phosphate)-2'-deoxyribonucleotide-DNA = a 3'-end 2'-deoxyribonucleotide-(2,3-dehydro-2,3-deoxyribose 5'-phosphate)-DNA + a 5'-end 5'-phospho-2'-deoxyribonucleoside-DNA + H(+). In terms of biological role, involved in base excision repair of DNA damaged by oxidation or by mutagenic agents. Acts as a DNA glycosylase that recognizes and removes damaged bases. Has a preference for oxidized purines, such as 7,8-dihydro-8-oxoguanine (8-oxoG). Has AP (apurinic/apyrimidinic) lyase activity and introduces nicks in the DNA strand. Cleaves the DNA backbone by beta-delta elimination to generate a single-strand break at the site of the removed base with both 3'- and 5'-phosphates. This Pelobacter propionicus (strain DSM 2379 / NBRC 103807 / OttBd1) protein is Formamidopyrimidine-DNA glycosylase.